A 371-amino-acid polypeptide reads, in one-letter code: DNA-directed RNA polymerase subunit alpha (371 aa).

The interval 1 to 248 (MSVKYGKFEM…KHFEVFNQFN (248 aa)) is alpha N-terminal domain (alpha-NTD). Residues 264 to 371 (DQDELMDKLS…KELVKHEDAK (108 aa)) form an alpha C-terminal domain (alpha-CTD) region.

The protein belongs to the RNA polymerase alpha chain family. In terms of assembly, homodimer. The RNAP catalytic core consists of 2 alpha, 1 beta, 1 beta' and 1 omega subunit. When a sigma factor is associated with the core the holoenzyme is formed, which can initiate transcription.

It catalyses the reaction RNA(n) + a ribonucleoside 5'-triphosphate = RNA(n+1) + diphosphate. Its function is as follows. DNA-dependent RNA polymerase catalyzes the transcription of DNA into RNA using the four ribonucleoside triphosphates as substrates. The polypeptide is DNA-directed RNA polymerase subunit alpha (Protochlamydia amoebophila (strain UWE25)).